Consider the following 153-residue polypeptide: Ribosome maturation factor RimP (153 aa).

It belongs to the RimP family.

It is found in the cytoplasm. Its function is as follows. Required for maturation of 30S ribosomal subunits. This Nostoc punctiforme (strain ATCC 29133 / PCC 73102) protein is Ribosome maturation factor RimP.